Here is a 201-residue protein sequence, read N- to C-terminus: UPF0301 protein Mvan_6057 (201 aa).

The protein belongs to the UPF0301 (AlgH) family.

The sequence is that of UPF0301 protein Mvan_6057 from Mycolicibacterium vanbaalenii (strain DSM 7251 / JCM 13017 / BCRC 16820 / KCTC 9966 / NRRL B-24157 / PYR-1) (Mycobacterium vanbaalenii).